The sequence spans 320 residues: Cytochrome f (320 aa).

The first 35 residues, 1–35 (MQTRNAFSWLKKQITRSISVSLMIYILTRTSISSA), serve as a signal peptide directing secretion. Heme contacts are provided by Tyr36, Cys56, Cys59, and His60. Residues 286-305 (VQGLLFFLASVILAQIFLVL) form a helical membrane-spanning segment.

Belongs to the cytochrome f family. The 4 large subunits of the cytochrome b6-f complex are cytochrome b6, subunit IV (17 kDa polypeptide, petD), cytochrome f and the Rieske protein, while the 4 small subunits are PetG, PetL, PetM and PetN. The complex functions as a dimer. Heme serves as cofactor.

Its subcellular location is the plastid. The protein resides in the chloroplast thylakoid membrane. Functionally, component of the cytochrome b6-f complex, which mediates electron transfer between photosystem II (PSII) and photosystem I (PSI), cyclic electron flow around PSI, and state transitions. This chain is Cytochrome f, found in Atropa belladonna (Belladonna).